Reading from the N-terminus, the 281-residue chain is Sulfur carrier protein FdhD (281 aa).

Cys-127 serves as the catalytic Cysteine persulfide intermediate. 264–269 is a binding site for Mo-bis(molybdopterin guanine dinucleotide); sequence FAREGR.

The protein belongs to the FdhD family.

It localises to the cytoplasm. In terms of biological role, required for formate dehydrogenase (FDH) activity. Acts as a sulfur carrier protein that transfers sulfur from IscS to the molybdenum cofactor prior to its insertion into FDH. In Mannheimia succiniciproducens (strain KCTC 0769BP / MBEL55E), this protein is Sulfur carrier protein FdhD.